Consider the following 182-residue polypeptide: dTTP/UTP pyrophosphatase (182 aa).

Catalysis depends on aspartate 64, which acts as the Proton acceptor.

It belongs to the Maf family. YhdE subfamily. A divalent metal cation serves as cofactor.

It is found in the cytoplasm. The enzyme catalyses dTTP + H2O = dTMP + diphosphate + H(+). It carries out the reaction UTP + H2O = UMP + diphosphate + H(+). In terms of biological role, nucleoside triphosphate pyrophosphatase that hydrolyzes dTTP and UTP. May have a dual role in cell division arrest and in preventing the incorporation of modified nucleotides into cellular nucleic acids. The sequence is that of dTTP/UTP pyrophosphatase from Thermosipho melanesiensis (strain DSM 12029 / CIP 104789 / BI429).